The sequence spans 207 residues: ATP-dependent Clp protease proteolytic subunit (207 aa).

The Nucleophile role is filled by serine 111. Histidine 136 is a catalytic residue.

It belongs to the peptidase S14 family. As to quaternary structure, fourteen ClpP subunits assemble into 2 heptameric rings which stack back to back to give a disk-like structure with a central cavity, resembling the structure of eukaryotic proteasomes. Component of the ClpAP and ClpXP complexes.

It localises to the cytoplasm. The enzyme catalyses Hydrolysis of proteins to small peptides in the presence of ATP and magnesium. alpha-casein is the usual test substrate. In the absence of ATP, only oligopeptides shorter than five residues are hydrolyzed (such as succinyl-Leu-Tyr-|-NHMec, and Leu-Tyr-Leu-|-Tyr-Trp, in which cleavage of the -Tyr-|-Leu- and -Tyr-|-Trp bonds also occurs).. In terms of biological role, cleaves peptides in various proteins in a process that requires ATP hydrolysis. Has a chymotrypsin-like activity. Plays a major role in the degradation of misfolded proteins. This Salmonella enteritidis PT4 (strain P125109) protein is ATP-dependent Clp protease proteolytic subunit.